Consider the following 441-residue polypeptide: Cytochrome c biogenesis protein Ccs1 (441 aa).

Transmembrane regions (helical) follow at residues 19–39 (LKLAIILLLMLALFSAFGTVI), 78–98 (TWWFTTLILLLAVSLFSCTLA), and 164–184 (IGPIIVHASLIIILFGALLGN).

The protein belongs to the Ccs1/CcsB family. In terms of assembly, may interact with CcsA.

The protein localises to the plastid. Its subcellular location is the chloroplast thylakoid membrane. Functionally, required during biogenesis of c-type cytochromes (cytochrome c6 and cytochrome f) at the step of heme attachment. This chain is Cytochrome c biogenesis protein Ccs1, found in Rhodomonas salina (Cryptomonas salina).